We begin with the raw amino-acid sequence, 239 residues long: Phosphoribosylaminoimidazole-succinocarboxamide synthase (239 aa).

Belongs to the SAICAR synthetase family.

The enzyme catalyses 5-amino-1-(5-phospho-D-ribosyl)imidazole-4-carboxylate + L-aspartate + ATP = (2S)-2-[5-amino-1-(5-phospho-beta-D-ribosyl)imidazole-4-carboxamido]succinate + ADP + phosphate + 2 H(+). The protein operates within purine metabolism; IMP biosynthesis via de novo pathway; 5-amino-1-(5-phospho-D-ribosyl)imidazole-4-carboxamide from 5-amino-1-(5-phospho-D-ribosyl)imidazole-4-carboxylate: step 1/2. The protein is Phosphoribosylaminoimidazole-succinocarboxamide synthase of Bacillus cytotoxicus (strain DSM 22905 / CIP 110041 / 391-98 / NVH 391-98).